The sequence spans 427 residues: Trigger factor (427 aa).

Residues 163–248 (GDTVVIDFVG…IHEVKAKEVP (86 aa)) form the PPIase FKBP-type domain.

Belongs to the FKBP-type PPIase family. Tig subfamily.

It localises to the cytoplasm. It catalyses the reaction [protein]-peptidylproline (omega=180) = [protein]-peptidylproline (omega=0). Its function is as follows. Involved in protein export. Acts as a chaperone by maintaining the newly synthesized protein in an open conformation. Functions as a peptidyl-prolyl cis-trans isomerase. This Streptococcus pneumoniae (strain 70585) protein is Trigger factor.